The chain runs to 1200 residues: SR-related and CTD-associated factor 4 (1200 aa).

In terms of domain architecture, CID spans 1-139; that stretch reads MDAVNAFNQE…PLLDMAAGTS (139 aa). Residue lysine 49 is modified to N6-acetyllysine. Residues 140–153 are compositionally biased toward polar residues; it reads NAAPGAENVTNNEG. Disordered stretches follow at residues 140 to 172, 299 to 324, and 346 to 566; these read NAAPGAENVTNNEGSPPPPVKVSSELPQAPTNS, VPASSATSPPPPQAPFGYPGDGMQQP, and SMQH…QIKS. Serine 154 carries the phosphoserine modification. 2 stretches are compositionally biased toward pro residues: residues 367–390 and 399–461; these read APPPFPPMPQPGMPQPGMPQPGMP and LPQP…PPVQ. Low complexity predominate over residues 462–471; it reads PTFQPTFQPQ. Residues 493–503 are compositionally biased toward basic and acidic residues; it reads EVKRHVPESRK. Residues 504–541 show a composition bias toward basic residues; sequence SRSRSPKRRRSRSGSRSRRSRHRRSRSRSRDRRRHSPR. Residues 543–558 show a composition bias toward basic and acidic residues; that stretch reads RSQERRDREKERERRQ. The RRM domain maps to 574 to 648; the sequence is TTLWVGQLDK…KSIKIAWALN (75 aa). 3 disordered regions span residues 696–724, 834–875, and 927–1200; these read WKGIPKKPENEVAQNGGAEASHTEPVSPI, VSGA…SLLG, and PPHM…EAPR. The residue at position 722 (serine 722) is a Phosphoserine. Pro residues-rich tracts occupy residues 856–868 and 927–958; these read PAAPTSLPTPPVT and PPHMMHRGPPPGPGGFAMPPPHGMKGPFPPHG. Residues 965–978 show a composition bias toward gly residues; sequence GMPGLGGPGPGPGG. Residues 986–1036 are compositionally biased toward low complexity; that stretch reads QQQPQQQQQQQQQQQQQQQQQQQQPPPQQSQTQQQPAPSQQPAPAQQQPQQ. Phosphoserine is present on serine 1058. Residues 1063 to 1139 are compositionally biased toward basic and acidic residues; it reads VENDRERYGS…RGKEKHEVAD (77 aa). Residues 1153 to 1162 are compositionally biased toward polar residues; that stretch reads QVGNTDTVSE. Serine 1178 carries the post-translational modification Phosphoserine.

Interacts with POLR2A; via C-terminal heptapeptide repeat domain (CTD) phosphorylated at 'Ser-2' and 'Ser-5'.

The protein localises to the nucleus. In terms of biological role, anti-terminator protein required to prevent early mRNA termination during transcription. Together with SCAF8, acts by suppressing the use of early, alternative poly(A) sites, thereby preventing the accumulation of non-functional truncated proteins. Mechanistically, associates with the phosphorylated C-terminal heptapeptide repeat domain (CTD) of the largest RNA polymerase II subunit (POLR2A), and subsequently binds nascent RNA upstream of early polyadenylation sites to prevent premature mRNA transcript cleavage and polyadenylation. Independently of SCAF8, also acts as a suppressor of transcriptional readthrough. This Rattus norvegicus (Rat) protein is SR-related and CTD-associated factor 4.